The sequence spans 957 residues: Thioredoxin domain-containing protein 11 (957 aa).

Residues 1-13 (MSECGGRGGGGGS) are compositionally biased toward gly residues. Residues 1 to 47 (MSECGGRGGGGGSSSSSDDAEDEGGGGGPAGSGSLSPAPAASSEGRL) are disordered. Positions 32–44 (SGSLSPAPAASSE) are enriched in low complexity. A helical membrane pass occupies residues 64 to 84 (LLCGAVALGCALLLALKFTCS). The 123-residue stretch at 91–213 (IPAKPPVSFF…IEKFVRRVMK (123 aa)) folds into the Thioredoxin 1 domain. Cystine bridges form between C441-C444 and C691-C694. The Thioredoxin 2 domain maps to 621–771 (LDPKQALMKF…LLRFILHHSD (151 aa)). Residues 785-889 (AECLQNEAVL…ADASETLLTE (105 aa)) adopt a coiled-coil conformation. Over residues 904-925 (LEGRDGADDRVPPSKARSEHPE) the composition is skewed to basic and acidic residues. Residues 904–957 (LEGRDGADDRVPPSKARSEHPEPPGAPRLPASTPLPANISSTLASEGSPENRTD) are disordered. Residues 941–951 (NISSTLASEGS) are compositionally biased toward polar residues.

This sequence belongs to the protein disulfide isomerase family. As to quaternary structure, interacts with the cytoplasmic part of DUOX1 and DUOX2. Interacts with TPO and CYBA.

Its subcellular location is the endoplasmic reticulum membrane. Functionally, may act as a redox regulator involved in DUOX proteins folding. The interaction with DUOX1 and DUOX2 suggest that it belongs to a multiprotein complex constituting the thyroid H(2)O(2) generating system. It is however not sufficient to assist DUOX1 and DUOX2 in H(2)O(2) generation. This Bos taurus (Bovine) protein is Thioredoxin domain-containing protein 11 (TXNDC11).